We begin with the raw amino-acid sequence, 411 residues long: Secretion apparatus protein BsaZ (411 aa).

A run of 4 helical transmembrane segments spans residues 28–48, 80–100, 137–157, and 175–195; these read IVAL…VDLT, IAAP…LVQS, ALLY…LYHA, and IVLT…VLIL. The segment at 341-411 is disordered; that stretch reads AANRGGPPPE…APARTGDQNA (71 aa). Positions 370–404 are enriched in low complexity; the sequence is DACADNAFPDDAPPGAAAPNAGSPDGPAPDGGAPA.

Belongs to the type III secretion exporter family.

It localises to the cell membrane. Functionally, part of the bsa type III secretion system, is involved in the intracellular replication of invading bacteria inside the host cell. Probably necessary for the lysis of the vacuole membrane and escape into the host cell cytoplasm. The chain is Secretion apparatus protein BsaZ (bsaZ) from Burkholderia pseudomallei (strain 1026b).